Consider the following 118-residue polypeptide: Transcription factor PAR2 (118 aa).

Residues 1–59 are disordered; that stretch reads MEKTLATSHTKRSSPPSPSSAVNTSSTGFNRRTRQRLSDATASVSETDVEDEDEDEEGV. Residues 19–30 show a composition bias toward polar residues; the sequence is SSAVNTSSTGFN. Positions 43–92 constitute a bHLH domain; sequence SVSETDVEDEDEDEEGVEEKIEALQTIVPGGTELGVDALFEETASYILAL. The span at 47–59 shows a compositional bias: acidic residues; that stretch reads TDVEDEDEDEEGV.

The protein belongs to the bHLH protein family. In terms of assembly, homodimer.

It localises to the nucleus. Functionally, atypical bHLH transcription factor that acts as a negative regulator of a variety of shade avoidance syndrome (SAS) responses, including seedling elongation and photosynthetic pigment accumulation. Acts as a direct transcriptional repressor of two auxin-responsive genes, SAUR15 and SAUR68. May function in integrating shade and hormone transcriptional networks in response to light and auxin changes. In Arabidopsis thaliana (Mouse-ear cress), this protein is Transcription factor PAR2 (PAR2).